A 189-amino-acid polypeptide reads, in one-letter code: Probable nicotinate-nucleotide adenylyltransferase (189 aa).

Belongs to the NadD family.

It catalyses the reaction nicotinate beta-D-ribonucleotide + ATP + H(+) = deamido-NAD(+) + diphosphate. It participates in cofactor biosynthesis; NAD(+) biosynthesis; deamido-NAD(+) from nicotinate D-ribonucleotide: step 1/1. Its function is as follows. Catalyzes the reversible adenylation of nicotinate mononucleotide (NaMN) to nicotinic acid adenine dinucleotide (NaAD). The polypeptide is Probable nicotinate-nucleotide adenylyltransferase (Bacillus cereus (strain ATCC 10987 / NRS 248)).